We begin with the raw amino-acid sequence, 460 residues long: Putative movement protein (460 aa).

Disordered stretches follow at residues 267–314 and 349–460; these read SGSK…SDFE and RQNQ…PSGL. Positions 368 to 379 are enriched in basic residues; the sequence is RKSKGISGRRKQ.

It belongs to the tobamoviruses movement protein family.

Suppressor of viral-induced RNA silencing. This Crataegus (hawthorn) protein is Putative movement protein.